A 465-amino-acid polypeptide reads, in one-letter code: Mothers against decapentaplegic homolog 1 (465 aa).

Positions 12–136 (PAVKRLLGWK…YKRVESPVLP (125 aa)) constitute an MH1 domain. Zn(2+) is bound by residues cysteine 64, cysteine 109, cysteine 121, and histidine 126. The tract at residues 161–240 (QNEPHMPHNA…EDQMTHDTSQ (80 aa)) is disordered. Low complexity predominate over residues 179–210 (PNSHPFPHSPNSSYPNSPGSSSSTYPHSPASS). In terms of domain architecture, MH2 spans 271–465 (WCSIVYYELN…SPHNPISSVS (195 aa)). Phosphoserine occurs at positions 463 and 465.

Belongs to the dwarfin/SMAD family. As to quaternary structure, found in a complex with SMAD4 and YY1. Interacts with HGS, NANOG and ZCCHC12. Upon C-terminus phosphorylation: forms trimers with another SMAD1 and the co-SMAD SMAD4. Interacts with PEBP2-alpha subunit, CREB-binding protein (CBP), p300, SMURF1, SMURF2, USP15 and HOXC8. Associates with ZNF423 or ZNF521 in response to BMP2 leading to activate transcription of BMP target genes. Interacts with SKOR1. Interacts (via MH2 domain) with LEMD3. Binding to LEMD3 results in at least a partial reduction of receptor-mediated phosphorylation. Forms a ternary complex with PSMB4 and OAZ1 before PSMB4 is incorporated into the 20S proteasome. Found in a macromolecular complex with FAM83G. Interacts (via MH2 domain) with FAM83G (via MH2 domain); in a SMAD4-independent manner. Interacts with ZC3H3. Interacts with TMEM119. Interacts (via MH1 and MH2 domains) with ZNF8. Interacts with RANBP3L; the interaction increases when SMAD1 is not phosphorylated and mediates SMAD1 nuclear export. Interacts with EGR1; this interaction inhibits SMAD1 dephosphorylation. Interacts with SMAD6. Interacts with YAP1. In terms of processing, phosphorylation of the C-terminal SVS motif by BMP type 1 receptor kinase activates SMAD1 by promoting dissociation from the receptor and trimerization with SMAD4. Phosphorylation by ERK2 MAP kinase in response to EGF or HGF prevents SMAD1 nuclear accumulation and transcriptional activity in response to BMP. Dephosphorylation, probably by PPM1A, induces its export from the nucleus to the cytoplasm. Dephosphorylation is inhibited by association with EGR1. Phosphorylation by CDK8/9 creates binding sites for YAP1, and subsequent phosphorylation by GSK3 switches off YAP1 binding and adds binding sites for SMURF1. Ubiquitinated by SMAD-specific E3 ubiquitin ligase SMURF1, leading to its degradation. Monoubiquitinated, leading to prevent DNA-binding. Deubiquitination by USP15 alleviates inhibition and promotes activation of TGF-beta target genes. Dephosphorylation, probably by PPM1A, induces its export from the nucleus to the cytoplasm. Phospho-SMAD1 is ubiquitinated by CHIP leading to disruption of the SMAD1-SMAD4 complex.

Its subcellular location is the cytoplasm. It localises to the nucleus. Its function is as follows. Transcriptional modulator that plays a role in various cellular processes, including embryonic development, cell differentiation, and tissue homeostasis. Upon BMP ligand binding to their receptors at the cell surface, is phosphorylated by activated type I BMP receptors (BMPRIs) and associates with SMAD4 to form an heteromeric complex which translocates into the nucleus acting as transcription factor. In turn, the hetero-trimeric complex recognizes cis-regulatory elements containing Smad Binding Elements (SBEs) to modulate the outcome of the signaling network. SMAD1/OAZ1/PSMB4 complex mediates the degradation of the CREBBP/EP300 repressor SNIP1. The chain is Mothers against decapentaplegic homolog 1 (SMAD1) from Coturnix japonica (Japanese quail).